We begin with the raw amino-acid sequence, 354 residues long: Ferrochelatase (354 aa).

Residues His-204 and Glu-306 each contribute to the Fe cation site.

The protein belongs to the ferrochelatase family.

The protein localises to the cytoplasm. The catalysed reaction is heme b + 2 H(+) = protoporphyrin IX + Fe(2+). The protein operates within porphyrin-containing compound metabolism; protoheme biosynthesis; protoheme from protoporphyrin-IX: step 1/1. Catalyzes the ferrous insertion into protoporphyrin IX. The protein is Ferrochelatase of Coxiella burnetii (strain RSA 493 / Nine Mile phase I).